Consider the following 475-residue polypeptide: Aspartyl/glutamyl-tRNA(Asn/Gln) amidotransferase subunit B (475 aa).

Belongs to the GatB/GatE family. GatB subfamily. Heterotrimer of A, B and C subunits.

The enzyme catalyses L-glutamyl-tRNA(Gln) + L-glutamine + ATP + H2O = L-glutaminyl-tRNA(Gln) + L-glutamate + ADP + phosphate + H(+). It catalyses the reaction L-aspartyl-tRNA(Asn) + L-glutamine + ATP + H2O = L-asparaginyl-tRNA(Asn) + L-glutamate + ADP + phosphate + 2 H(+). Functionally, allows the formation of correctly charged Asn-tRNA(Asn) or Gln-tRNA(Gln) through the transamidation of misacylated Asp-tRNA(Asn) or Glu-tRNA(Gln) in organisms which lack either or both of asparaginyl-tRNA or glutaminyl-tRNA synthetases. The reaction takes place in the presence of glutamine and ATP through an activated phospho-Asp-tRNA(Asn) or phospho-Glu-tRNA(Gln). The sequence is that of Aspartyl/glutamyl-tRNA(Asn/Gln) amidotransferase subunit B from Staphylococcus saprophyticus subsp. saprophyticus (strain ATCC 15305 / DSM 20229 / NCIMB 8711 / NCTC 7292 / S-41).